Here is a 427-residue protein sequence, read N- to C-terminus: Serine--tRNA ligase (427 aa).

230-232 (TAE) serves as a coordination point for L-serine. 261–263 (RAE) contributes to the ATP binding site. Glu-284 lines the L-serine pocket. 348–351 (EISS) is an ATP binding site. Ser-384 is an L-serine binding site.

It belongs to the class-II aminoacyl-tRNA synthetase family. Type-1 seryl-tRNA synthetase subfamily. As to quaternary structure, homodimer. The tRNA molecule binds across the dimer.

The protein localises to the cytoplasm. It catalyses the reaction tRNA(Ser) + L-serine + ATP = L-seryl-tRNA(Ser) + AMP + diphosphate + H(+). The enzyme catalyses tRNA(Sec) + L-serine + ATP = L-seryl-tRNA(Sec) + AMP + diphosphate + H(+). It participates in aminoacyl-tRNA biosynthesis; selenocysteinyl-tRNA(Sec) biosynthesis; L-seryl-tRNA(Sec) from L-serine and tRNA(Sec): step 1/1. In terms of biological role, catalyzes the attachment of serine to tRNA(Ser). Is also able to aminoacylate tRNA(Sec) with serine, to form the misacylated tRNA L-seryl-tRNA(Sec), which will be further converted into selenocysteinyl-tRNA(Sec). The polypeptide is Serine--tRNA ligase (Moorella thermoacetica (strain ATCC 39073 / JCM 9320)).